The sequence spans 424 residues: L-glutamine:2-deoxy-scyllo-inosose aminotransferase (424 aa).

The residue at position 202 (lysine 202) is an N6-(pyridoxal phosphate)lysine.

This sequence belongs to the DegT/DnrJ/EryC1 family. L-glutamine:2-deoxy-scyllo-inosose/scyllo-inosose aminotransferase subfamily. The cofactor is pyridoxal 5'-phosphate.

It carries out the reaction 2-deoxy-L-scyllo-inosose + L-glutamine = 2-deoxy-scyllo-inosamine + 2-oxoglutaramate. The enzyme catalyses 3-amino-2,3-dideoxy-scyllo-inosose + L-glutamine = 2-deoxystreptamine + 2-oxoglutaramate. The protein operates within metabolic intermediate biosynthesis; 2-deoxystreptamine biosynthesis; 2-deoxystreptamine from D-glucose 6-phosphate: step 2/4. It participates in metabolic intermediate biosynthesis; 2-deoxystreptamine biosynthesis; 2-deoxystreptamine from D-glucose 6-phosphate: step 4/4. It functions in the pathway antibiotic biosynthesis; paromomycin biosynthesis. Functionally, catalyzes the PLP-dependent transamination of 2-deoxy-scyllo-inosose (2-DOI) to form 2-deoxy-scyllo-inosamine (2-DOIA) using L-glutamine as the amino donor. Also catalyzes the transamination of 3-amino-2,3-dideoxy-scyllo-inosose (keto-2-DOIA) into 2-deoxystreptamine (2-DOS). The protein is L-glutamine:2-deoxy-scyllo-inosose aminotransferase (parS) of Streptomyces paromomycinus (Streptomyces rimosus subsp. paromomycinus).